The primary structure comprises 688 residues: Zinc finger CCCH domain-containing protein 22 (688 aa).

A disordered region spans residues 62–123; sequence ALLPPPPPPS…QPFSRSNGSV (62 aa). Low complexity predominate over residues 101-117; sequence PLSASSPSSWAQAQPFS. The segment at 233–260 adopts a C3H1-type zinc-finger fold; the sequence is GFGWKPCLYYARGFCKNGSSCRFVHGDD. Residues 366–442 form the RRM domain; that stretch reads RQIYLTFPAD…RVLVKPYKEK (77 aa). The stretch at 487–522 forms a coiled coil; the sequence is TNEMMLRRKLEEQQQAAELQQAIELHSRRLMDLQLL. Positions 552–624 are disordered; the sequence is LATTMVESPP…PTKSSVSAHQ (73 aa). Basic and acidic residues predominate over residues 574–589; the sequence is TEERKMVNGGGDKEES. The span at 613-624 shows a compositional bias: polar residues; the sequence is ASPTKSSVSAHQ.

This is Zinc finger CCCH domain-containing protein 22 from Oryza sativa subsp. japonica (Rice).